Consider the following 769-residue polypeptide: Calcium up-regulated protein F (769 aa).

Positions 1-21 are disordered; that stretch reads MINIKDISKSSNQSEEKSLKG. Ricin B-type lectin domains are found at residues 25–145 and 116–249; these read KTKY…WTTF and QGNG…WGIN.

The protein belongs to the cup family.

It localises to the cytoplasm. It is found in the membrane. Functionally, may play an important role in stabilizing and/or regulating the cell membrane during Ca(2+) stress or certain stages of development. This is Calcium up-regulated protein F (cupF) from Dictyostelium discoideum (Social amoeba).